We begin with the raw amino-acid sequence, 237 residues long: Phosphoribosylaminoimidazole-succinocarboxamide synthase (237 aa).

Belongs to the SAICAR synthetase family.

It carries out the reaction 5-amino-1-(5-phospho-D-ribosyl)imidazole-4-carboxylate + L-aspartate + ATP = (2S)-2-[5-amino-1-(5-phospho-beta-D-ribosyl)imidazole-4-carboxamido]succinate + ADP + phosphate + 2 H(+). The protein operates within purine metabolism; IMP biosynthesis via de novo pathway; 5-amino-1-(5-phospho-D-ribosyl)imidazole-4-carboxamide from 5-amino-1-(5-phospho-D-ribosyl)imidazole-4-carboxylate: step 1/2. This chain is Phosphoribosylaminoimidazole-succinocarboxamide synthase, found in Alteromonas mediterranea (strain DSM 17117 / CIP 110805 / LMG 28347 / Deep ecotype).